A 496-amino-acid polypeptide reads, in one-letter code: 2-methylcitrate dehydratase-like protein oryR (496 aa).

Belongs to the PrpD family.

The protein operates within secondary metabolite biosynthesis. In terms of biological role, 2-methylcitrate dehydratase-like protein; part of the gene cluster that mediates the biosynthesis of oryzines, natural products with an unusual maleidride backbone. The two subunits of the fungal fatty acid synthase oryfasA and oryfasB probably form octenoic acid. This fatty acid is most likely activated by the acyl-CoA ligase oryP to give octenyl-CoA before the citrate synthase-like protein oryE catalyzes condensation with oxaloacetate to form tricarboxylic acid. The next steps of the pathways are conjectural, but a favorite possible route has been proposed, beginning with decarboxylation and concomitant dehydration by the decarboxylase oryM, followed by tautomerization, which may lead to the production of a diene intermediate. Reduction of this diene intermediate could give the known metabolite piliformic acid. On the pathway to oryzine B and oryzine A, however, hydroxylation of the diene by the alpha-ketoglutarate-dependent dioxygenase oryG and lactonisation by the lactonohydrolases oryH or oryL could give oryzine B directly. Finally, enoyl reduction by the dehydrogenase oryD would then convert oryzine B into oryzine A. The chain is 2-methylcitrate dehydratase-like protein oryR from Aspergillus oryzae (strain ATCC 42149 / RIB 40) (Yellow koji mold).